The primary structure comprises 193 residues: Large ribosomal subunit protein uL18 (193 aa).

Belongs to the universal ribosomal protein uL18 family. Part of the 50S ribosomal subunit. Contacts the 5S and 23S rRNAs.

Its function is as follows. This is one of the proteins that bind and probably mediate the attachment of the 5S RNA into the large ribosomal subunit, where it forms part of the central protuberance. This chain is Large ribosomal subunit protein uL18, found in Methanosphaera stadtmanae (strain ATCC 43021 / DSM 3091 / JCM 11832 / MCB-3).